Consider the following 159-residue polypeptide: Small ribosomal subunit protein uS9 (159 aa).

Belongs to the universal ribosomal protein uS9 family.

This Rickettsia conorii (strain ATCC VR-613 / Malish 7) protein is Small ribosomal subunit protein uS9.